Reading from the N-terminus, the 141-residue chain is Lysozyme P (141 aa).

Positions M1–Q18 are cleaved as a signal peptide. The C-type lysozyme domain maps to R20–F141. 4 disulfide bridges follow: C25–C140, C46–C130, C81–C97, and C93–C111. Catalysis depends on residues E51 and D69.

This sequence belongs to the glycosyl hydrolase 22 family. As to expression, salivary gland.

It catalyses the reaction Hydrolysis of (1-&gt;4)-beta-linkages between N-acetylmuramic acid and N-acetyl-D-glucosamine residues in a peptidoglycan and between N-acetyl-D-glucosamine residues in chitodextrins.. Unlikely to play an active role in the humoral immune defense. May have a function in the digestion of bacteria in the food. This is Lysozyme P (LysP) from Drosophila melanogaster (Fruit fly).